A 444-amino-acid chain; its full sequence is Amino-acid acetyltransferase (444 aa).

The 140-residue stretch at 295–434 (EKVRRANIND…QALYNYQRRS (140 aa)) folds into the N-acetyltransferase domain.

It belongs to the acetyltransferase family. ArgA subfamily. Homohexamer.

Its subcellular location is the cytoplasm. It carries out the reaction L-glutamate + acetyl-CoA = N-acetyl-L-glutamate + CoA + H(+). It participates in amino-acid biosynthesis; L-arginine biosynthesis; N(2)-acetyl-L-ornithine from L-glutamate: step 1/4. This is Amino-acid acetyltransferase from Proteus mirabilis (strain HI4320).